Consider the following 122-residue polypeptide: ATP synthase epsilon chain (122 aa).

It belongs to the ATPase epsilon chain family. F-type ATPases have 2 components, CF(1) - the catalytic core - and CF(0) - the membrane proton channel. CF(1) has five subunits: alpha(3), beta(3), gamma(1), delta(1), epsilon(1). CF(0) has three main subunits: a, b and c.

The protein localises to the cell membrane. Functionally, produces ATP from ADP in the presence of a proton gradient across the membrane. This chain is ATP synthase epsilon chain, found in Rhodococcus erythropolis (strain PR4 / NBRC 100887).